A 345-amino-acid polypeptide reads, in one-letter code: MREPAFWHRPHAWQSLLLSPLSVLYGAIAAHRMAQSGLDAGVPVICVGNFHVGGAGKTPTVLALSALLRELGEHPVVLSRGYGGRLAGPVAVDPAIHAAADVGDEPLMMAAHVPVVVSRHRAEGVGLAKTQGASVILMDDGFQNPSLTKDLALIVIDGARGLGNGRVFPAGPLRAPLPPQLARTDALIVVGSGAAGEAVAARVTAAGKPVFRAHLQPDPEVVAALAGRPLLAFAGIGDPQRFFRTLRASGLDVVGERAFPDHHPFSTDEIAALADKARHQGATLVTTQKDLARLRGHRILGRSDPVITAFPVTLQFSDPTALRSLVAHRLASARQRQPFALSAPG.

51–58 (HVGGAGKT) provides a ligand contact to ATP.

It belongs to the LpxK family.

It carries out the reaction a lipid A disaccharide + ATP = a lipid IVA + ADP + H(+). It participates in glycolipid biosynthesis; lipid IV(A) biosynthesis; lipid IV(A) from (3R)-3-hydroxytetradecanoyl-[acyl-carrier-protein] and UDP-N-acetyl-alpha-D-glucosamine: step 6/6. Transfers the gamma-phosphate of ATP to the 4'-position of a tetraacyldisaccharide 1-phosphate intermediate (termed DS-1-P) to form tetraacyldisaccharide 1,4'-bis-phosphate (lipid IVA). This chain is Tetraacyldisaccharide 4'-kinase, found in Bradyrhizobium sp. (strain BTAi1 / ATCC BAA-1182).